The following is a 446-amino-acid chain: Histidine--tRNA ligase (446 aa).

It belongs to the class-II aminoacyl-tRNA synthetase family. In terms of assembly, homodimer.

It localises to the cytoplasm. It catalyses the reaction tRNA(His) + L-histidine + ATP = L-histidyl-tRNA(His) + AMP + diphosphate + H(+). This Burkholderia ambifaria (strain MC40-6) protein is Histidine--tRNA ligase.